The sequence spans 138 residues: Cysteine desulfuration protein SufE (138 aa).

Cys51 acts as the Cysteine persulfide intermediate in catalysis.

The protein belongs to the SufE family. As to quaternary structure, homodimer. Interacts with SufS.

The protein resides in the cytoplasm. The protein operates within cofactor biosynthesis; iron-sulfur cluster biosynthesis. In terms of biological role, participates in cysteine desulfuration mediated by SufS. Cysteine desulfuration mobilizes sulfur from L-cysteine to yield L-alanine and constitutes an essential step in sulfur metabolism for biosynthesis of a variety of sulfur-containing biomolecules. Functions as a sulfur acceptor for SufS, by mediating the direct transfer of the sulfur atom from the S-sulfanylcysteine of SufS, an intermediate product of cysteine desulfuration process. This Citrobacter koseri (strain ATCC BAA-895 / CDC 4225-83 / SGSC4696) protein is Cysteine desulfuration protein SufE.